Reading from the N-terminus, the 471-residue chain is 3-isopropylmalate dehydratase large subunit (471 aa).

[4Fe-4S] cluster contacts are provided by C347, C407, and C410.

The protein belongs to the aconitase/IPM isomerase family. LeuC type 1 subfamily. As to quaternary structure, heterodimer of LeuC and LeuD. It depends on [4Fe-4S] cluster as a cofactor.

It carries out the reaction (2R,3S)-3-isopropylmalate = (2S)-2-isopropylmalate. It functions in the pathway amino-acid biosynthesis; L-leucine biosynthesis; L-leucine from 3-methyl-2-oxobutanoate: step 2/4. Its function is as follows. Catalyzes the isomerization between 2-isopropylmalate and 3-isopropylmalate, via the formation of 2-isopropylmaleate. The chain is 3-isopropylmalate dehydratase large subunit from Geobacillus sp. (strain WCH70).